The following is a 347-amino-acid chain: Lipoyl synthase (347 aa).

Cys-77, Cys-82, Cys-88, Cys-103, Cys-107, Cys-110, and Ser-317 together coordinate [4Fe-4S] cluster. Residues 89 to 306 (FADGTATFMI…MDYGKKIGFF (218 aa)) enclose the Radical SAM core domain.

This sequence belongs to the radical SAM superfamily. Lipoyl synthase family. [4Fe-4S] cluster serves as cofactor.

The protein resides in the cytoplasm. The catalysed reaction is [[Fe-S] cluster scaffold protein carrying a second [4Fe-4S](2+) cluster] + N(6)-octanoyl-L-lysyl-[protein] + 2 oxidized [2Fe-2S]-[ferredoxin] + 2 S-adenosyl-L-methionine + 4 H(+) = [[Fe-S] cluster scaffold protein] + N(6)-[(R)-dihydrolipoyl]-L-lysyl-[protein] + 4 Fe(3+) + 2 hydrogen sulfide + 2 5'-deoxyadenosine + 2 L-methionine + 2 reduced [2Fe-2S]-[ferredoxin]. The protein operates within protein modification; protein lipoylation via endogenous pathway; protein N(6)-(lipoyl)lysine from octanoyl-[acyl-carrier-protein]: step 2/2. Catalyzes the radical-mediated insertion of two sulfur atoms into the C-6 and C-8 positions of the octanoyl moiety bound to the lipoyl domains of lipoate-dependent enzymes, thereby converting the octanoylated domains into lipoylated derivatives. This chain is Lipoyl synthase, found in Psychrobacter arcticus (strain DSM 17307 / VKM B-2377 / 273-4).